Consider the following 316-residue polypeptide: MSPVISHPRPAAARHQFDELSPITITVDCPAKTNLTLEVGPAHDEWGGRHELDTIYCAIGVYDTVTATAKQPGAGFSLELEGAYLGDLASSRSDMRRNHAVLALFAMAQAAEREPDVALTITKRIPVGAGLGGGSADAAATMLAVNRLWELNWPIERLRTIAATLGADMPFCLTGGLAYGTGFGERITDIAPGSRDELALIEQGFSGEVLVGAYQSQLSTPEVYHTFDLVGAAEGDRNHLQAAAISLHPRSGQAIDAATQAGASHAFVSGSGPSVVAFAADEAAAQRIIDVWRDTAVVDRIIRAKSPAHPNIGVRQ.

Lys32 is an active-site residue. 126 to 136 is an ATP binding site; it reads PVGAGLGGGSA. Residue Asp168 is part of the active site.

Belongs to the GHMP kinase family. IspE subfamily.

It carries out the reaction 4-CDP-2-C-methyl-D-erythritol + ATP = 4-CDP-2-C-methyl-D-erythritol 2-phosphate + ADP + H(+). It participates in isoprenoid biosynthesis; isopentenyl diphosphate biosynthesis via DXP pathway; isopentenyl diphosphate from 1-deoxy-D-xylulose 5-phosphate: step 3/6. In terms of biological role, catalyzes the phosphorylation of the position 2 hydroxy group of 4-diphosphocytidyl-2C-methyl-D-erythritol. This Bifidobacterium longum subsp. infantis (strain ATCC 15697 / DSM 20088 / JCM 1222 / NCTC 11817 / S12) protein is 4-diphosphocytidyl-2-C-methyl-D-erythritol kinase.